A 274-amino-acid polypeptide reads, in one-letter code: Thymidylate synthase (274 aa).

Position 21 (Arg-21) interacts with dUMP. His-51 contacts (6R)-5,10-methylene-5,6,7,8-tetrahydrofolate. Position 123-124 (123-124 (RR)) interacts with dUMP. Residue Cys-156 is the Nucleophile of the active site. DUMP contacts are provided by residues 176–179 (RSAD), Asn-187, and 217–219 (HIY). (6R)-5,10-methylene-5,6,7,8-tetrahydrofolate is bound at residue Asp-179. Ser-273 is a (6R)-5,10-methylene-5,6,7,8-tetrahydrofolate binding site.

It belongs to the thymidylate synthase family. Bacterial-type ThyA subfamily. In terms of assembly, homodimer.

It localises to the cytoplasm. The enzyme catalyses dUMP + (6R)-5,10-methylene-5,6,7,8-tetrahydrofolate = 7,8-dihydrofolate + dTMP. Its pathway is pyrimidine metabolism; dTTP biosynthesis. In terms of biological role, catalyzes the reductive methylation of 2'-deoxyuridine-5'-monophosphate (dUMP) to 2'-deoxythymidine-5'-monophosphate (dTMP) while utilizing 5,10-methylenetetrahydrofolate (mTHF) as the methyl donor and reductant in the reaction, yielding dihydrofolate (DHF) as a by-product. This enzymatic reaction provides an intracellular de novo source of dTMP, an essential precursor for DNA biosynthesis. This chain is Thymidylate synthase, found in Francisella tularensis subsp. novicida (strain U112).